Here is a 601-residue protein sequence, read N- to C-terminus: MDLIRNFSIIAHIDHGKSTLADRIIQHCGGLSDREMEAQVLDSMDIERERGITIKAQTAALTYKSRDGKTYNINLIDTPGHVDFSYEVSRSLSACEGALLVVDASQGVEAQTVANCYMALELGVEVVPVLNKIDLPQADPERAKKEIEDVIGIDASHAVTCSAKTGLGVQDVIEEMIARVPPPTGNAADPLQALIIDSWFDNYVGVVMLVRVVNGSLKPKDKITLMANGSSHLVEHVGVFSPKSIDRPELSAGQVGFVIAGIKELKAAKVGDTVTHSPGQQGRVPATEPLPGFKEVKPQVFAGLYPVESSEYDQLRESLEKLQLNDASLLYEPEVSQALGFGFRCGFLGLLHMEIVQERLERQYGMNLITTAPTVVYQVEQSDGSILSVDNPSKMPEASKINTILEPIVTVNLYMPQEYVGAIITLCVGKRGIQMDMNYLGRQVKLTYELPMAEIVLDFFDKMKSISRGYASMDYEFKEYRPADVVKVDILINGERVDALSVIVHRSNSQHRGREVVAKMRGIIPRQMFDVAIQAAIGSNIVARENVKALRKNVLAKCYGGDISRKRKLLEKQKEGKKRMKQVGNVEIPQEAFLAILQVDD.

The 183-residue stretch at 2-184 (DLIRNFSIIA…EMIARVPPPT (183 aa)) folds into the tr-type G domain. Residues 14–19 (DHGKST) and 131–134 (NKID) contribute to the GTP site.

This sequence belongs to the TRAFAC class translation factor GTPase superfamily. Classic translation factor GTPase family. LepA subfamily.

The protein resides in the cell inner membrane. The catalysed reaction is GTP + H2O = GDP + phosphate + H(+). Its function is as follows. Required for accurate and efficient protein synthesis under certain stress conditions. May act as a fidelity factor of the translation reaction, by catalyzing a one-codon backward translocation of tRNAs on improperly translocated ribosomes. Back-translocation proceeds from a post-translocation (POST) complex to a pre-translocation (PRE) complex, thus giving elongation factor G a second chance to translocate the tRNAs correctly. Binds to ribosomes in a GTP-dependent manner. This chain is Elongation factor 4, found in Polynucleobacter asymbioticus (strain DSM 18221 / CIP 109841 / QLW-P1DMWA-1) (Polynucleobacter necessarius subsp. asymbioticus).